Consider the following 564-residue polypeptide: Alpha-farnesene synthase (564 aa).

Mg(2+) is bound by residues Asp313, Asp317, Thr464, and Glu468. The DDXXD motif signature appears at 313–317; sequence DDVYD.

The protein belongs to the terpene synthase family. The cofactor is Mg(2+).

The enzyme catalyses (2E,6E)-farnesyl diphosphate = (3E,6E)-alpha-farnesene + diphosphate. Catalyzes the cyclization of farnesyl diphosphate to (E,E)-alpha-farnesene. In Ricinus communis (Castor bean), this protein is Alpha-farnesene synthase (TPS7).